The following is a 72-amino-acid chain: Translation initiation factor IF-1 (72 aa).

The S1-like domain maps to 1–72; it reads MSKDDVIEID…DKGRITYRYK (72 aa).

This sequence belongs to the IF-1 family. As to quaternary structure, component of the 30S ribosomal translation pre-initiation complex which assembles on the 30S ribosome in the order IF-2 and IF-3, IF-1 and N-formylmethionyl-tRNA(fMet); mRNA recruitment can occur at any time during PIC assembly.

The protein resides in the cytoplasm. In terms of biological role, one of the essential components for the initiation of protein synthesis. Stabilizes the binding of IF-2 and IF-3 on the 30S subunit to which N-formylmethionyl-tRNA(fMet) subsequently binds. Helps modulate mRNA selection, yielding the 30S pre-initiation complex (PIC). Upon addition of the 50S ribosomal subunit IF-1, IF-2 and IF-3 are released leaving the mature 70S translation initiation complex. The polypeptide is Translation initiation factor IF-1 (Campylobacter hominis (strain ATCC BAA-381 / DSM 21671 / CCUG 45161 / LMG 19568 / NCTC 13146 / CH001A)).